Here is a 71-residue protein sequence, read N- to C-terminus: Disintegrin tzabcanin (71 aa).

The Disintegrin domain maps to 1–71 (GEECDCGSPA…ADCPRNHFHA (71 aa)). Disulfide bonds link Cys4–Cys19, Cys6–Cys14, Cys13–Cys36, Cys27–Cys33, Cys32–Cys57, and Cys45–Cys64. The short motif at 49–51 (RGD) is the Cell attachment site element.

This sequence belongs to the venom metalloproteinase (M12B) family. P-II subfamily. P-IIa sub-subfamily. As to expression, expressed by the venom gland.

It localises to the secreted. Functionally, inhibits fibrinogen interaction with platelets. Acts by binding to alpha-IIb/beta-3 (ITGA2B/ITGB3) on the platelet surface and inhibits aggregation induced by ADP, thrombin, platelet-activating factor and collagen. Inhibits cell adhesion to vitronectin, probably by blocking its receptor integrin alpha-V/beta-3 (ITGAV/ITGB3), and to fibronectin in vitro. Shows little to no cytotoxicity in vitro. The chain is Disintegrin tzabcanin from Crotalus tzabcan (Yucatan neotropical rattlesnake).